The chain runs to 145 residues: Endosomal/vacuolar adapter protein YPT35 (145 aa).

The 114-residue stretch at 32–145 (ISDVLVGEHH…STVVREFVLG (114 aa)) folds into the PX domain.

It belongs to the YPT35 family.

The protein resides in the endosome membrane. It localises to the vacuole membrane. Functionally, recruits the lipid transfer protein VPS13 to endosomal and vacuolar membranes. The protein is Endosomal/vacuolar adapter protein YPT35 (YPT35) of Meyerozyma guilliermondii (strain ATCC 6260 / CBS 566 / DSM 6381 / JCM 1539 / NBRC 10279 / NRRL Y-324) (Yeast).